We begin with the raw amino-acid sequence, 706 residues long: DNA ligase (706 aa).

NAD(+) contacts are provided by residues 48–52 (DAAYD), 97–98 (SL), and Glu131. Catalysis depends on Lys133, which acts as the N6-AMP-lysine intermediate. Residues Arg154, Glu191, Lys307, and Lys331 each contribute to the NAD(+) site. Zn(2+) contacts are provided by Cys425, Cys428, Cys443, and Cys449. The BRCT domain maps to 628-706 (RADSAVAGKT…EDEWLKLIEG (79 aa)).

Belongs to the NAD-dependent DNA ligase family. LigA subfamily. It depends on Mg(2+) as a cofactor. Requires Mn(2+) as cofactor.

The enzyme catalyses NAD(+) + (deoxyribonucleotide)n-3'-hydroxyl + 5'-phospho-(deoxyribonucleotide)m = (deoxyribonucleotide)n+m + AMP + beta-nicotinamide D-nucleotide.. Functionally, DNA ligase that catalyzes the formation of phosphodiester linkages between 5'-phosphoryl and 3'-hydroxyl groups in double-stranded DNA using NAD as a coenzyme and as the energy source for the reaction. It is essential for DNA replication and repair of damaged DNA. The polypeptide is DNA ligase (Afipia carboxidovorans (strain ATCC 49405 / DSM 1227 / KCTC 32145 / OM5) (Oligotropha carboxidovorans)).